A 262-amino-acid polypeptide reads, in one-letter code: Tropinone reductase homolog At2g30670 (262 aa).

13–37 (LVTGGASGIGHAIVEELAGLGARIY) lines the NADP(+) pocket. Position 146 (Ser146) interacts with substrate. Tyr159 serves as the catalytic Proton acceptor.

The protein belongs to the short-chain dehydrogenases/reductases (SDR) family. SDR65C subfamily.

The polypeptide is Tropinone reductase homolog At2g30670 (Arabidopsis thaliana (Mouse-ear cress)).